The primary structure comprises 237 residues: Ribonuclease 3 (237 aa).

In terms of domain architecture, RNase III spans 8–134; sequence RSALLEKLGV…VIGAVYLDAG (127 aa). A Mg(2+)-binding site is contributed by Glu-47. The active site involves Asp-51. The Mg(2+) site is built by Asp-120 and Glu-123. Glu-123 is an active-site residue. The 69-residue stretch at 161–229 folds into the DRBM domain; that stretch reads DPKTSLQEAA…ALSAWTALTN (69 aa).

This sequence belongs to the ribonuclease III family. Homodimer. Mg(2+) serves as cofactor.

It is found in the cytoplasm. It catalyses the reaction Endonucleolytic cleavage to 5'-phosphomonoester.. Its function is as follows. Digests double-stranded RNA. Involved in the processing of primary rRNA transcript to yield the immediate precursors to the large and small rRNAs (23S and 16S). Processes some mRNAs, and tRNAs when they are encoded in the rRNA operon. Processes pre-crRNA and tracrRNA of type II CRISPR loci if present in the organism. This chain is Ribonuclease 3, found in Leifsonia xyli subsp. xyli (strain CTCB07).